The sequence spans 98 residues: Defensin (98 aa).

Intrachain disulfides connect Cys61–Cys88, Cys74–Cys94, and Cys78–Cys96.

This sequence belongs to the invertebrate defensin family. Type 1 subfamily.

The protein is Defensin of Mamestra brassicae (Cabbage moth).